The following is a 474-amino-acid chain: Ribulose bisphosphate carboxylase large chain (474 aa).

N-acetylproline is present on proline 2. Lysine 13 carries the N6,N6,N6-trimethyllysine modification. Substrate is bound by residues asparagine 122 and threonine 172. Lysine 174 functions as the Proton acceptor in the catalytic mechanism. Lysine 176 is a substrate binding site. Residues lysine 200, aspartate 202, and glutamate 203 each coordinate Mg(2+). Lysine 200 carries the N6-carboxylysine modification. The active-site Proton acceptor is the histidine 293. The substrate site is built by arginine 294, histidine 326, and serine 378.

It belongs to the RuBisCO large chain family. Type I subfamily. Heterohexadecamer of 8 large chains and 8 small chains; disulfide-linked. The disulfide link is formed within the large subunit homodimers. The cofactor is Mg(2+). Post-translationally, the disulfide bond which can form in the large chain dimeric partners within the hexadecamer appears to be associated with oxidative stress and protein turnover.

Its subcellular location is the plastid. It localises to the chloroplast. It catalyses the reaction 2 (2R)-3-phosphoglycerate + 2 H(+) = D-ribulose 1,5-bisphosphate + CO2 + H2O. The catalysed reaction is D-ribulose 1,5-bisphosphate + O2 = 2-phosphoglycolate + (2R)-3-phosphoglycerate + 2 H(+). In terms of biological role, ruBisCO catalyzes two reactions: the carboxylation of D-ribulose 1,5-bisphosphate, the primary event in carbon dioxide fixation, as well as the oxidative fragmentation of the pentose substrate in the photorespiration process. Both reactions occur simultaneously and in competition at the same active site. The sequence is that of Ribulose bisphosphate carboxylase large chain from Oltmannsiellopsis viridis (Marine flagellate).